The following is a 283-amino-acid chain: Bifunctional protein FolD (283 aa).

166-168 (GAS) is a binding site for NADP(+).

It belongs to the tetrahydrofolate dehydrogenase/cyclohydrolase family. As to quaternary structure, homodimer.

The enzyme catalyses (6R)-5,10-methylene-5,6,7,8-tetrahydrofolate + NADP(+) = (6R)-5,10-methenyltetrahydrofolate + NADPH. The catalysed reaction is (6R)-5,10-methenyltetrahydrofolate + H2O = (6R)-10-formyltetrahydrofolate + H(+). The protein operates within one-carbon metabolism; tetrahydrofolate interconversion. In terms of biological role, catalyzes the oxidation of 5,10-methylenetetrahydrofolate to 5,10-methenyltetrahydrofolate and then the hydrolysis of 5,10-methenyltetrahydrofolate to 10-formyltetrahydrofolate. The protein is Bifunctional protein FolD of Coxiella burnetii (strain Dugway 5J108-111).